The sequence spans 249 residues: ATP synthase subunit a, chloroplastic (249 aa).

5 consecutive transmembrane segments (helical) span residues 40 to 60, 97 to 117, 136 to 156, 201 to 221, and 222 to 242; these read QVLI…IVAV, VPFI…GALL, INTT…AGLS, LVVV…VMFL, and GLFT…AYIG.

It belongs to the ATPase A chain family. As to quaternary structure, F-type ATPases have 2 components, CF(1) - the catalytic core - and CF(0) - the membrane proton channel. CF(1) has five subunits: alpha(3), beta(3), gamma(1), delta(1), epsilon(1). CF(0) has four main subunits: a, b, b' and c.

Its subcellular location is the plastid. It localises to the chloroplast thylakoid membrane. In terms of biological role, key component of the proton channel; it plays a direct role in the translocation of protons across the membrane. This Manihot esculenta (Cassava) protein is ATP synthase subunit a, chloroplastic.